The following is a 273-amino-acid chain: Small ribosomal subunit protein uS3 (273 aa).

The KH type-2 domain occupies 40 to 110 (IRNLFFVNYR…NLDLTINEIG (71 aa)). Residues 244–265 (QVLSANKLTGSDVETSSIQALT) are compositionally biased toward polar residues. The disordered stretch occupies residues 244 to 273 (QVLSANKLTGSDVETSSIQALTKPNKEDKQ).

This sequence belongs to the universal ribosomal protein uS3 family. In terms of assembly, part of the 30S ribosomal subunit. Forms a tight complex with proteins S10 and S14.

Functionally, binds the lower part of the 30S subunit head. Binds mRNA in the 70S ribosome, positioning it for translation. The chain is Small ribosomal subunit protein uS3 from Mycoplasma pneumoniae (strain ATCC 29342 / M129 / Subtype 1) (Mycoplasmoides pneumoniae).